The chain runs to 433 residues: Hps1-dma1 cluster O-methyltransferase (433 aa).

The segment at 36 to 55 (NGHPERSLNSTDSVRLSDAP) is disordered. Asp-285 serves as a coordination point for S-adenosyl-L-methionine. His-331 acts as the Proton acceptor in catalysis.

This sequence belongs to the class I-like SAM-binding methyltransferase superfamily. Cation-independent O-methyltransferase family. COMT subfamily.

The protein operates within secondary metabolite biosynthesis. In terms of biological role, O-methyltransferase; part of the hps1-dma1 gene cluster that probably mediates the biosynthesis a derivative of cyclopiazonic acid (CPA). The hybrid polyketide synthase-nonribosomal peptide synthetase (PKS-NRPS) nps1 might incorporates acetyl-CoA, malonyl-CoA, and tryptophan (Trp) and utilizes a C-terminal redox-incompetent reductase domain to make and release the tryptophan tetramic acid, cyclo-acetoacetyl-L-tryptophan (c-AATrp), as the first intermediate in the pathway. In addition, the cluster also includes the tryptophan dimethylallyltransferase dma1, the FAD-dependent oxidoreductase toxD, the cytochrome P450 monooxygenase cyp3.1 and the methyltransferase DOTSEDRAFT_139328; the latter 2 being not present in all CPA-producing fungi but involved in additional modifications that occur in biosynthesis the of a range of CPA and CPA-like products. Further studies are required to clarify whether the CPA-like hps1-dma1 cluster is functional or a non-functional relic reflecting evolution of D.septosporum. This Dothistroma septosporum (strain NZE10 / CBS 128990) (Red band needle blight fungus) protein is Hps1-dma1 cluster O-methyltransferase.